Reading from the N-terminus, the 359-residue chain is Molybdenum import ATP-binding protein ModC (359 aa).

Residues methionine 1 to valine 233 enclose the ABC transporter domain. Glycine 32–threonine 39 is a binding site for ATP. In terms of domain architecture, Mop spans alanine 289 to alanine 355.

The protein belongs to the ABC transporter superfamily. Molybdate importer (TC 3.A.1.8) family. The complex is composed of two ATP-binding proteins (ModC), two transmembrane proteins (ModB) and a solute-binding protein (ModA).

The protein localises to the cell inner membrane. It carries out the reaction molybdate(out) + ATP + H2O = molybdate(in) + ADP + phosphate + H(+). In terms of biological role, part of the ABC transporter complex ModABC involved in molybdenum import. Responsible for energy coupling to the transport system. The sequence is that of Molybdenum import ATP-binding protein ModC from Brucella abortus (strain 2308).